The sequence spans 135 residues: Ribosomal RNA large subunit methyltransferase H (135 aa).

Residues L52, G83, and 102–107 (LSSLTL) contribute to the S-adenosyl-L-methionine site.

It belongs to the RNA methyltransferase RlmH family. In terms of assembly, homodimer.

The protein resides in the cytoplasm. It carries out the reaction pseudouridine(1915) in 23S rRNA + S-adenosyl-L-methionine = N(3)-methylpseudouridine(1915) in 23S rRNA + S-adenosyl-L-homocysteine + H(+). Functionally, specifically methylates the pseudouridine at position 1915 (m3Psi1915) in 23S rRNA. This Polynucleobacter necessarius subsp. necessarius (strain STIR1) protein is Ribosomal RNA large subunit methyltransferase H.